Here is a 248-residue protein sequence, read N- to C-terminus: ATP synthase subunit a, chloroplastic (248 aa).

Transmembrane regions (helical) follow at residues 38–58, 96–116, 135–155, 200–220, and 221–241; these read QVLI…TIAV, VPFI…GALL, INTT…AGLA, LVVA…VMFL, and GLFT…AYIG.

This sequence belongs to the ATPase A chain family. As to quaternary structure, F-type ATPases have 2 components, CF(1) - the catalytic core - and CF(0) - the membrane proton channel. CF(1) has five subunits: alpha(3), beta(3), gamma(1), delta(1), epsilon(1). CF(0) has four main subunits: a, b, b' and c.

The protein localises to the plastid. The protein resides in the chloroplast thylakoid membrane. Key component of the proton channel; it plays a direct role in the translocation of protons across the membrane. This is ATP synthase subunit a, chloroplastic from Pinus koraiensis (Korean pine).